The following is a 680-amino-acid chain: Translation factor GUF1 homolog, chloroplastic (680 aa).

The transit peptide at 1–51 directs the protein to the chloroplast; sequence MAAKINSLAALVSLQASHHHHXSTPFYFSPFSPHLSTTLTSRRRSLRSAVV. In terms of domain architecture, tr-type G spans 83-264; sequence SNIRNFCIIA…AIVKRIPPPC (182 aa). GTP-binding positions include 92 to 99, 157 to 161, and 211 to 214; these read AHIDHGKS, DTPGH, and NKID.

The protein belongs to the TRAFAC class translation factor GTPase superfamily. Classic translation factor GTPase family. LepA subfamily.

The protein resides in the plastid. It is found in the chloroplast. It catalyses the reaction GTP + H2O = GDP + phosphate + H(+). Its function is as follows. Promotes chloroplast protein synthesis. May act as a fidelity factor of the translation reaction, by catalyzing a one-codon backward translocation of tRNAs on improperly translocated ribosomes. The chain is Translation factor GUF1 homolog, chloroplastic from Vitis vinifera (Grape).